Here is a 619-residue protein sequence, read N- to C-terminus: ATP-dependent zinc metalloprotease FtsH 1 (619 aa).

Topologically, residues 1-8 are cytoplasmic; the sequence is MADEKRPA. The helical transmembrane segment at 9–29 threads the bilayer; that stretch reads SRAWLGYLLIAVGILVLSGIV. The Periplasmic portion of the chain corresponds to 30 to 108; sequence RSRGRPLVPY…RIEAKSPQTS (79 aa). A helical transmembrane segment spans residues 109–129; it reads VWMQVAIWMLPLVLINAAFFM. The Cytoplasmic segment spans residues 130 to 619; the sequence is MLRRAGQGAG…KIAVGPPSAA (490 aa). 203 to 210 contributes to the ATP binding site; it reads GPPGTGKT. His426 lines the Zn(2+) pocket. Residue Glu427 is part of the active site. Residues His430 and Asp503 each contribute to the Zn(2+) site.

The protein in the central section; belongs to the AAA ATPase family. In the C-terminal section; belongs to the peptidase M41 family. Homohexamer. Zn(2+) is required as a cofactor.

The protein localises to the cell inner membrane. Functionally, acts as a processive, ATP-dependent zinc metallopeptidase for both cytoplasmic and membrane proteins. Plays a role in the quality control of integral membrane proteins. In Sorangium cellulosum (strain So ce56) (Polyangium cellulosum (strain So ce56)), this protein is ATP-dependent zinc metalloprotease FtsH 1.